A 345-amino-acid polypeptide reads, in one-letter code: Glycosyltransferase 1 domain-containing protein 1 (345 aa).

An N-terminal signal peptide occupies residues 1–19 (MKILFLACLRAHTGNSTTA). N-linked (GlcNAc...) asparagine glycosylation is found at N246 and N322.

This sequence belongs to the glycosyltransferase group 1 family. Glycosyltransferase 4 subfamily.

Its subcellular location is the secreted. The polypeptide is Glycosyltransferase 1 domain-containing protein 1 (glt1d1) (Xenopus tropicalis (Western clawed frog)).